We begin with the raw amino-acid sequence, 36 residues long: Phospholipase A2 hemilipin-2 (36 aa).

Belongs to the phospholipase A2 family. Group III subfamily. Heterodimer composed of a small subunit and a large subunit; disulfid-linked. Requires Ca(2+) as cofactor. As to expression, expressed by the venom gland.

The protein localises to the secreted. It carries out the reaction a 1,2-diacyl-sn-glycero-3-phosphocholine + H2O = a 1-acyl-sn-glycero-3-phosphocholine + a fatty acid + H(+). Scorpion venom phospholipase A2 (PLA2) that impacts angiogenesis in vitro and in vivo without showing any cytotoxic or apoptotic signs. The antiangiogenic effect is independent from the catalytic activity and seems to be held by its small subunit. PLA2 catalyzes the calcium-dependent hydrolysis of the 2-acyl groups in 3-sn-phosphoglycerides. This Hemiscorpius lepturus (Scorpion) protein is Phospholipase A2 hemilipin-2.